The sequence spans 448 residues: Probable ribonuclease FAU-1 (448 aa).

A disordered region spans residues 426-448 (EAPGGKICTSEGLTSALPQSSSA). The span at 436–448 (EGLTSALPQSSSA) shows a compositional bias: polar residues.

The protein belongs to the FAU-1 family.

Functionally, probable RNase involved in rRNA stability through maturation and/or degradation of precursor rRNAs. Binds to RNA in loop regions with AU-rich sequences. The polypeptide is Probable ribonuclease FAU-1 (Pyrobaculum islandicum (strain DSM 4184 / JCM 9189 / GEO3)).